The following is a 115-amino-acid chain: Delta-hexatoxin-Hi1a (115 aa).

The N-terminal stretch at 1–18 (MKVIATLYGLLFLTVVLG) is a signal peptide. Positions 19 to 73 (DITEGNENDLVENFREELSEADIPLLKKLEAIEDALLEKDFLPYEEEDRNARPKR) are excised as a propeptide. Cystine bridges form between Cys-74-Cys-88, Cys-81-Cys-93, Cys-87-Cys-104, and Cys-89-Cys-115.

Belongs to the neurotoxin 06 (delta-actx) family. As to expression, expressed by the venom gland.

It localises to the secreted. Neurotoxin that slows inactivation of voltage-gated sodium channels (Nav). In vivo, is lethal to both vertebrates and insects. This is Delta-hexatoxin-Hi1a from Hadronyche infensa (Fraser island funnel-web spider).